A 398-amino-acid polypeptide reads, in one-letter code: 1-deoxy-D-xylulose 5-phosphate reductoisomerase (398 aa).

NADPH-binding residues include T10, G11, S12, I13, G36, R37, N38, and N124. K125 lines the 1-deoxy-D-xylulose 5-phosphate pocket. Position 126 (E126) interacts with NADPH. D150 provides a ligand contact to Mn(2+). 1-deoxy-D-xylulose 5-phosphate contacts are provided by S151, E152, S186, and H209. A Mn(2+)-binding site is contributed by E152. Residue G215 coordinates NADPH. S222, N227, K228, and E231 together coordinate 1-deoxy-D-xylulose 5-phosphate. Position 231 (E231) interacts with Mn(2+).

It belongs to the DXR family. Homodimer. It depends on Mg(2+) as a cofactor. Mn(2+) is required as a cofactor.

The enzyme catalyses 2-C-methyl-D-erythritol 4-phosphate + NADP(+) = 1-deoxy-D-xylulose 5-phosphate + NADPH + H(+). The protein operates within isoprenoid biosynthesis; isopentenyl diphosphate biosynthesis via DXP pathway; isopentenyl diphosphate from 1-deoxy-D-xylulose 5-phosphate: step 1/6. Functionally, catalyzes the NADPH-dependent rearrangement and reduction of 1-deoxy-D-xylulose-5-phosphate (DXP) to 2-C-methyl-D-erythritol 4-phosphate (MEP). The protein is 1-deoxy-D-xylulose 5-phosphate reductoisomerase of Yersinia pseudotuberculosis serotype IB (strain PB1/+).